Consider the following 345-residue polypeptide: NADPH-dependent curcumin reductase (345 aa).

The span at 1 to 10 shows a compositional bias: basic residues; that stretch reads MGQQKQRNRR. The tract at residues 1 to 24 is disordered; it reads MGQQKQRNRRWVLASRPHGAPVPE. Positions 186, 225, and 333 each coordinate NADP(+).

In terms of assembly, homodimer.

The enzyme catalyses tetrahydrocurcumin + 2 NADP(+) = curcumin + 2 NADPH + 2 H(+). It catalyses the reaction tetrahydrocurcumin + NADP(+) = dihydrocurcumin + NADPH + H(+). It carries out the reaction dihydrocurcumin + NADP(+) = curcumin + NADPH + H(+). Its activity is regulated as follows. Inhibited by thiol-specific reagents (p-chloromercuribenzoate and 5,5'-dithio-bis-2-nitrobenzoate). Its function is as follows. Catalyzes the metal-independent reduction of curcumin to dihydrocurcumin (DHC) as an intermediate product, followed by further reduction to tetrahydrocurcumin (THC) as an end product. It also acts on 3-octene-2-one, 3-hepten-2-one, resveratrol, and trans-2-octenal. The polypeptide is NADPH-dependent curcumin reductase (Escherichia coli (strain K12)).